The primary structure comprises 398 residues: ATP-dependent RNA helicase eIF4A (398 aa).

A Q motif motif is present at residues D25–Q53. A Helicase ATP-binding domain is found at I56–I226. A69–T76 contributes to the ATP binding site. A DEAD box motif is present at residues D174 to D177. Residues G237–I398 enclose the Helicase C-terminal domain.

This sequence belongs to the DEAD box helicase family. eIF4A subfamily. As to quaternary structure, component of the eIF4F complex, which composition varies with external and internal environmental conditions. It is composed of at least eIF4A, eIF4E and eIF4G.

It is found in the cytoplasm. It catalyses the reaction ATP + H2O = ADP + phosphate + H(+). ATP-dependent RNA helicase which is a subunit of the eIF4F complex involved in cap recognition and is required for mRNA binding to ribosome. In the current model of translation initiation, eIF4A unwinds RNA secondary structures in the 5'-UTR of mRNAs which is necessary to allow efficient binding of the small ribosomal subunit, and subsequent scanning for the initiator codon. The sequence is that of ATP-dependent RNA helicase eIF4A (tif1) from Aspergillus clavatus (strain ATCC 1007 / CBS 513.65 / DSM 816 / NCTC 3887 / NRRL 1 / QM 1276 / 107).